Reading from the N-terminus, the 788-residue chain is MEFDLNTEIAEVEEEENDDVGVGVGGGTRIDKGRLGISPSSSSSCSSGSSSSSSSTGSASSIYSELWHACAGPLTCLPKKGNVVVYFPQGHLEQDAMVSYSSPLEIPKFDLNPQIVCRVVNVQLLANKDTDEVYTQVTLLPLQEFSMLNGEGKEVKELGGEEERNGSSSVKRTPHMFCKTLTASDTSTHGGFSVPRRAAEDCFAPLDYKQQRPSQELIAKDLHGVEWKFRHIYRGQPRRHLLTTGWSIFVSQKNLVSGDAVLFLRDEGGELRLGIRRAARPRNGLPDSIIEKNSCSNILSLVANAVSTKSMFHVFYSPRATHAEFVIPYEKYITSIRSPVCIGTRFRMRFEMDDSPERRCAGVVTGVCDLDPYRWPNSKWRCLLVRWDESFVSDHQERVSPWEIDPSVSLPHLSIQSSPRPKRPWAGLLDTTPPGNPITKRGGFLDFEESVRPSKVLQGQENIGSASPSQGFDVMNRRILDFAMQSHANPVLVSSRVKDRFGEFVDATGVNPACSGVMDLDRFPRVLQGQEICSLKSFPQFAGFSPAAAPNPFAYQANKSSYYPLALHGIRSTHVPYQNPYNAGNQSSGPPSRAINFGEETRKFDAQNEGGLPNNVTADLPFKIDMMGKQKGSELNMNASSGCKLFGFSLPVETPASKPQSSSKRICTKVHKQGSQVGRAIDLSRLNGYDDLLMELERLFNMEGLLRDPEKGWRILYTDSENDMMVVGDDPWHDFCNVVWKIHLYTKEEVENANDDNKSCLEQAALMMEASKSSSVSQPDSSPTITRV.

Acidic residues predominate over residues 1–19; the sequence is MEFDLNTEIAEVEEEENDD. Residues 1-53 are disordered; the sequence is MEFDLNTEIAEVEEEENDDVGVGVGGGTRIDKGRLGISPSSSSSCSSGSSSSS. A compositionally biased stretch (low complexity) spans 38–53; it reads SPSSSSSCSSGSSSSS. Residues 177–279 constitute a DNA-binding region (TF-B3); it reads FCKTLTASDT…ELRLGIRRAA (103 aa). The interval 413–433 is disordered; sequence LSIQSSPRPKRPWAGLLDTTP. Residues 665-747 form the PB1 domain; it reads RICTKVHKQG…VVWKIHLYTK (83 aa).

This sequence belongs to the ARF family. In terms of assembly, homodimers and heterodimers. Expressed in the whole plant.

It is found in the nucleus. Functionally, auxin response factors (ARFs) are transcriptional factors that bind specifically to the DNA sequence 5'-TGTCTC-3' found in the auxin-responsive promoter elements (AuxREs). Could act as transcriptional activator or repressor. Formation of heterodimers with Aux/IAA proteins may alter their ability to modulate early auxin response genes expression. The protein is Auxin response factor 4 (ARF4) of Arabidopsis thaliana (Mouse-ear cress).